The primary structure comprises 363 residues: tRNA N6-adenosine threonylcarbamoyltransferase (363 aa).

Fe cation is bound by residues histidine 138, histidine 142, and tyrosine 159. Residues 159–163 (YVSGG), aspartate 191, aspartate 212, and serine 295 contribute to the substrate site. A Fe cation-binding site is contributed by aspartate 323.

Belongs to the KAE1 / TsaD family. It depends on Fe(2+) as a cofactor.

Its subcellular location is the cytoplasm. It carries out the reaction L-threonylcarbamoyladenylate + adenosine(37) in tRNA = N(6)-L-threonylcarbamoyladenosine(37) in tRNA + AMP + H(+). In terms of biological role, required for the formation of a threonylcarbamoyl group on adenosine at position 37 (t(6)A37) in tRNAs that read codons beginning with adenine. Is probably involved in the transfer of the threonylcarbamoyl moiety of threonylcarbamoyl-AMP (TC-AMP) to the N6 group of A37. This is tRNA N6-adenosine threonylcarbamoyltransferase from Hyperthermus butylicus (strain DSM 5456 / JCM 9403 / PLM1-5).